The following is a 510-amino-acid chain: Global transcription regulator sge1 (510 aa).

3 disordered regions span residues Pro-94–Asn-152, His-393–Ser-438, and Leu-469–Leu-510. Residues Asn-123–Ser-143 are compositionally biased toward low complexity. Composition is skewed to polar residues over residues Gly-471–Phe-480 and Pro-501–Leu-510.

The protein belongs to the MIT1/WOR1 family.

It localises to the nucleus. Global transcriptional regulator of pathogenicity. Differentially regulates expression of effector genes. Also required for radial growth and production of asexual conidiospores, and plays a role in mycelium pigmentation. Not required for induction of Ave1, the effector that activates resistance mediated by the Ve1 immune receptor in tomato. The polypeptide is Global transcription regulator sge1 (Verticillium dahliae (strain VdLs.17 / ATCC MYA-4575 / FGSC 10137) (Verticillium wilt)).